The sequence spans 399 residues: Tryptophan synthase beta chain (399 aa).

Residue Lys92 is modified to N6-(pyridoxal phosphate)lysine.

This sequence belongs to the TrpB family. Tetramer of two alpha and two beta chains. Requires pyridoxal 5'-phosphate as cofactor.

It carries out the reaction (1S,2R)-1-C-(indol-3-yl)glycerol 3-phosphate + L-serine = D-glyceraldehyde 3-phosphate + L-tryptophan + H2O. Its pathway is amino-acid biosynthesis; L-tryptophan biosynthesis; L-tryptophan from chorismate: step 5/5. Functionally, the beta subunit is responsible for the synthesis of L-tryptophan from indole and L-serine. The sequence is that of Tryptophan synthase beta chain from Bordetella petrii (strain ATCC BAA-461 / DSM 12804 / CCUG 43448).